A 747-amino-acid chain; its full sequence is Mitochondrial inner membrane i-AAA protease supercomplex subunit YME1 (747 aa).

Residues 51-64 show a composition bias toward basic and acidic residues; it reads KNSGEMPPKKEADS. The interval 51–92 is disordered; the sequence is KNSGEMPPKKEADSSGKASNKSTISSIDNSQPPPPSNTNDKT. Positions 66-80 are enriched in polar residues; sequence GKASNKSTISSIDNS. An ATP-binding site is contributed by 321-328; it reads GPPGTGKT. Histidine 540 is a Zn(2+) binding site. Glutamate 541 is an active-site residue. Zn(2+) contacts are provided by histidine 544 and aspartate 618. A disordered region spans residues 718–747; that stretch reads STNTVVEGPDSDERKDIGDDKPKIPTMLNA. Basic and acidic residues predominate over residues 728–740; that stretch reads SDERKDIGDDKPK.

In the N-terminal section; belongs to the AAA ATPase family. This sequence in the C-terminal section; belongs to the peptidase M41 family. As to quaternary structure, component of the mitochondrial inner membrane i-AAA protease supercomplex composed of MGR1, MGR3 and YME1. Interacts directly with MGR1. It depends on Zn(2+) as a cofactor.

Its subcellular location is the mitochondrion inner membrane. Catalytic subunit of the mitochondrial inner membrane i-AAA protease supercomplex required for mitochondrial inner membrane protein turnover. The protease is probably ATP-dependent. Important to maintain the integrity of the mitochondrial compartment. Required both for the degradation of unassembled subunit 2 of cytochrome c oxidase (COX2) and for efficient assembly of mitochondrial respiratory chain. Binds unfolded substrates in an ATPase-independent manner; binding of folded COX2, a physiological substrate, requires an active ATPase but when COX2 is destabilized an active ATPase is no longer necessary. May process ATG32. This chain is Mitochondrial inner membrane i-AAA protease supercomplex subunit YME1 (YME1), found in Saccharomyces cerevisiae (strain ATCC 204508 / S288c) (Baker's yeast).